A 297-amino-acid chain; its full sequence is Nuclear transcription factor Y subunit B-11 (297 aa).

The interval 1-25 is disordered; that stretch reads MKSRKSYGHLLSPVGSPPLDNESGE. The DNA-binding element occupies 63-69; that stretch reads LPIANVS. The segment at 90 to 101 is subunit association domain (SAD); the sequence is VQECVSEFISFV.

This sequence belongs to the NFYB/HAP3 subunit family. Heterotrimeric transcription factor composed of three components, NF-YA, NF-YB and NF-YC. NF-YB and NF-YC must interact and dimerize for NF-YA association and DNA binding. Interacts with NFYC2, NFYC4 and NFYC6. In terms of tissue distribution, expressed in roots, culms, nodes, leaf blades, leaf sheaths and young panicles.

Its subcellular location is the nucleus. It localises to the cytoplasm. In terms of biological role, probable transcription factor involved in the regulation of flowering time under long day (LD) conditions. Functions as a repressor of flowering, independently of HD1 and GHD7. Controls flowering time by negatively regulating the expression of EHD1 and HD3A. Regulates plant height by promoting cell elongation in the internodes. Component of the NF-Y/HAP transcription factor complex. The polypeptide is Nuclear transcription factor Y subunit B-11 (HD5) (Oryza sativa subsp. japonica (Rice)).